The primary structure comprises 95 residues: Co-chaperonin GroES (95 aa).

The protein belongs to the GroES chaperonin family. In terms of assembly, heptamer of 7 subunits arranged in a ring. Interacts with the chaperonin GroEL.

It localises to the cytoplasm. In terms of biological role, together with the chaperonin GroEL, plays an essential role in assisting protein folding. The GroEL-GroES system forms a nano-cage that allows encapsulation of the non-native substrate proteins and provides a physical environment optimized to promote and accelerate protein folding. GroES binds to the apical surface of the GroEL ring, thereby capping the opening of the GroEL channel. The chain is Co-chaperonin GroES from Rickettsia akari (strain Hartford).